The sequence spans 294 residues: Cyclin-dependent kinase A-1 (294 aa).

Residues 4-287 (YEKVEKIGEG…ARAALEHEYF (284 aa)) enclose the Protein kinase domain. Residues 10–18 (IGEGTYGVV) and K33 contribute to the ATP site. Residue Y15 is modified to Phosphotyrosine. The active-site Proton acceptor is D127. At T161 the chain carries Phosphothreonine.

It belongs to the protein kinase superfamily. CMGC Ser/Thr protein kinase family. CDC2/CDKX subfamily. As to quaternary structure, interacts with CDT1A, CYCA2-3, CYCD2-1, CYCD3-1, CYCD4-1, CYCD4-2, CYCH1-1, CYCU1-1, CYCU2-1, CYCU2-2, CYCU3-1, CYCU4-1, CYCU4-2, CYCU4-3, CKS1, KRP2/ICK2, KRP3/ICK6, KRP4/ICK7, KRP6/ICK4, KRP7/ICK5, and C-terminal domain of KRP1/ICK1. Interacts with WEE1 and TIF4A-1/EIF4A-1. Interacts with PAS2; when phosphorylated at Tyr-15. Interacts with SMR3, SMR4, SMR5, SMR6, SMR8 and At4g14310. Binds to CYCD3-2. Component of a DREAM-like complex which modulates a variety of developmentally regulated genes and of the mitotic genes in proliferating and differentiated cells. Interacts with MYB3R3 at later and with MYB3R4 at earlier stages of leaf development. May interact with SPCH. In terms of processing, phosphorylated at Tyr-15 by WEE1. Phosphorylation at Thr-161 is important for the kinase activity and substrate binding. Binding to the anti-phosphatase PAS2 prevents dephosphorylation. In terms of tissue distribution, expressed in roots, stems, flowers and siliques.

The protein resides in the cytoplasm. It is found in the nucleus. The catalysed reaction is L-seryl-[protein] + ATP = O-phospho-L-seryl-[protein] + ADP + H(+). The enzyme catalyses L-threonyl-[protein] + ATP = O-phospho-L-threonyl-[protein] + ADP + H(+). It carries out the reaction [DNA-directed RNA polymerase] + ATP = phospho-[DNA-directed RNA polymerase] + ADP + H(+). CDK kinase activated by CDKF-1. CDK kinase activity inhibited by KRP1/ICK1, KRP2/ICK2, KRP3/ICK6, KRP4/ICK7, KRP5/ICK3, KRP6/ICK4 and KRP7/ICK5. Down-regulated by phosphorylation by WEE1. Its function is as follows. Involved in the control of the cell cycle. Essential for both G1/S and G2/M (mitosis) phase transitions. Functions in cell morphogenesis as well as cell proliferation. Required for cell division (entry into mitosis) of the generative cell in male gametogenesis. Required to trigger guard mother cells (GMC) symmetric divisions at the late stage of stomatal development, probably via the regulation of G1 to S transition in the cell cycle. Required for the function of SPCH in entering the stomatal lineage. Promotes divisions in the guard cells (GCs) after the guard mother cells (GMC) symmetric division when in the presence of CYCD3-2 via the phosphorylation of SPCH. This chain is Cyclin-dependent kinase A-1, found in Arabidopsis thaliana (Mouse-ear cress).